Reading from the N-terminus, the 355-residue chain is Probable nitronate monooxygenase (355 aa).

FMN contacts are provided by residues N71, Q175, G180, G219, and 238–241; that span reads QMGT.

This sequence belongs to the nitronate monooxygenase family. NMO class I subfamily. FMN is required as a cofactor.

The enzyme catalyses 3 propionate 3-nitronate + 3 O2 + H2O = 3 3-oxopropanoate + 2 nitrate + nitrite + H2O2 + 3 H(+). Nitronate monooxygenase that uses molecular oxygen to catalyze the oxidative denitrification of alkyl nitronates. Acts on propionate 3-nitronate (P3N), the presumed physiological substrate. Probably functions in the detoxification of P3N, a metabolic poison produced by plants and fungi as a defense mechanism. The sequence is that of Probable nitronate monooxygenase from Staphylococcus saprophyticus subsp. saprophyticus (strain ATCC 15305 / DSM 20229 / NCIMB 8711 / NCTC 7292 / S-41).